The chain runs to 459 residues: Palmitoyltransferase PFA4 (459 aa).

Topologically, residues 1–9 are cytoplasmic; that stretch reads MAARNWSRV. Residues 10–30 traverse the membrane as a helical segment; it reads WVGGTVILISFIAFSSQIFVI. Topologically, residues 31 to 37 are lumenal; it reads WPWYGRE. Residues 38-58 traverse the membrane as a helical segment; it reads ISLDLLKLLVPLNLAAFMIFW. Topologically, residues 59-138 are cytoplasmic; it reads NYRLCVITSP…GNCVGFYNQG (80 aa). Residues 95-145 enclose the DHHC domain; the sequence is RYCKNCEHYKPPRAHHCRQCKTCWLKLDHHCPWIGNCVGFYNQGHFIRFLL. The S-palmitoyl cysteine intermediate role is filled by Cys-125. A helical transmembrane segment spans residues 139 to 159; it reads HFIRFLLWVDIGTTFHLIIMV. Topologically, residues 160-177 are lumenal; it reads RRVLYIAEYYHQEPTLAD. A helical membrane pass occupies residues 178–198; that stretch reads VLFLVFNFATCVPVWLCVGMF. Over 199-459 the chain is Cytoplasmic; sequence SIYHVYLACG…DTEEESGYAH (261 aa). A disordered region spans residues 278–379; that stretch reads HTTQYFWPPQ…DYDHYDEGPM (102 aa). The segment covering 286-299 has biased composition (pro residues); that stretch reads PQDPSRLPNPPPIP. The segment covering 310-322 has biased composition (polar residues); sequence NGFNPNLQPTNSL. Basic and acidic residues predominate over residues 331–356; the sequence is HIDEDEHSHERDQYRHYSSGEERDND.

Belongs to the DHHC palmitoyltransferase family. PFA4 subfamily.

Its subcellular location is the endoplasmic reticulum membrane. The catalysed reaction is L-cysteinyl-[protein] + hexadecanoyl-CoA = S-hexadecanoyl-L-cysteinyl-[protein] + CoA. Functionally, mediates the reversible addition of palmitate to target proteins, thereby regulating their membrane association and biological function. This Cryptococcus neoformans var. neoformans serotype D (strain B-3501A) (Filobasidiella neoformans) protein is Palmitoyltransferase PFA4.